Here is a 945-residue protein sequence, read N- to C-terminus: Netrin receptor UNC5B (945 aa).

The signal sequence occupies residues 1-26 (MGARSGARGALLLALLLCWDPRLSQA). Residues 27–377 (GTDSGSEVLP…LEASGDAALY (351 aa)) are Extracellular-facing. The Ig-like domain occupies 48-145 (PYFLQEPQDA…AGTTKSRRAY (98 aa)). Cystine bridges form between Cys69–Cys130, Cys81–Cys128, Cys174–Cys225, Cys258–Cys295, Cys262–Cys299, Cys273–Cys285, Cys314–Cys348, Cys318–Cys353, and Cys326–Cys338. The 96-residue stretch at 147-242 (RIAYLRKNFD…KRRSTTATVI (96 aa)) folds into the Ig-like C2-type domain. An N-linked (GlcNAc...) asparagine glycan is attached at Asn222. TSP type-1 domains lie at 246–300 (NGGW…TICP) and 302–354 (DGAW…GLCM). N-linked (GlcNAc...) asparagine glycosylation occurs at Asn347. Residues 378–398 (AGLVVAIFVVVAILMAVGVVV) traverse the membrane as a helical segment. The Cytoplasmic segment spans residues 399–945 (YRRNCRDFDT…LVAVATDGDC (547 aa)). Cys403 carries S-palmitoyl cysteine lipidation. The ZU5 domain maps to 543–686 (SSVSGTFGCL…LGTYVFTGES (144 aa)). At Tyr581 the chain carries Phosphotyrosine. The tract at residues 689 to 838 (RSAVKRLQLA…AETPAGSLDT (150 aa)) is UPA domain. An interaction with DCC region spans residues 707 to 725 (SLEYSLRVYCLEDTPVALK). The Death domain maps to 865 to 943 (KICNSLDAPN…EMLVAVATDG (79 aa)).

Belongs to the unc-5 family. As to quaternary structure, interacts with the cytoplasmic part of DCC. Interacts with GNAI2 via its cytoplasmic part. Interacts (via death domain) with DAPK1 (via death domain). Interacts (via extracellular domain) with FLRT3 (via extracellular domain); the interaction is direct. Interacts (via extracellular domain) with FLRT2 and FLRT3 (via extracellular domain), but has higher affinity for FLRT3. Identified in a complex with FLRT3 and ADGRL3; does not interact with ADGRL3 by itself. Post-translationally, phosphorylated on cytoplasmic tyrosine residues. Proteolytically cleaved by caspases during apoptosis. The cleavage does not take place when the receptor is associated with netrin ligand. Its cleavage by caspases is required to induce apoptosis. In terms of processing, palmitoylation is required for pro-apoptotic activity, but not for location at lipid rafts. In terms of tissue distribution, highly expressed in brain. Also expressed at lower level in developing lung, cartilage, kidney and hematopoietic and immune tissues.

The protein localises to the cell membrane. It is found in the membrane raft. Its function is as follows. Receptor for netrin required for axon guidance. Mediates axon repulsion of neuronal growth cones in the developing nervous system upon ligand binding. Axon repulsion in growth cones may be caused by its association with DCC that may trigger signaling for repulsion. Functions as a netrin receptor that negatively regulates vascular branching during angiogenesis. Mediates retraction of tip cell filopodia on endothelial growth cones in response to netrin. It also acts as a dependence receptor required for apoptosis induction when not associated with netrin ligand. Mediates apoptosis by activating DAPK1. In the absence of NTN1, activates DAPK1 by reducing its autoinhibitory phosphorylation at Ser-308 thereby increasing its catalytic activity. This Homo sapiens (Human) protein is Netrin receptor UNC5B (UNC5B).